Here is a 416-residue protein sequence, read N- to C-terminus: Adenylosuccinate synthetase (416 aa).

Residues 13 to 19 (GDEGKGK) and 41 to 43 (GHT) contribute to the GTP site. Catalysis depends on D14, which acts as the Proton acceptor. Mg(2+)-binding residues include D14 and G41. Residues 14–17 (DEGK), 39–42 (NAGH), T126, R140, Q220, T235, and R299 each bind IMP. The Proton donor role is filled by H42. 295-301 (VSTGRKR) is a binding site for substrate. Residues R301, 327-329 (KLD), and 405-407 (STS) each bind GTP.

It belongs to the adenylosuccinate synthetase family. Homodimer. It depends on Mg(2+) as a cofactor.

It localises to the cytoplasm. It catalyses the reaction IMP + L-aspartate + GTP = N(6)-(1,2-dicarboxyethyl)-AMP + GDP + phosphate + 2 H(+). The protein operates within purine metabolism; AMP biosynthesis via de novo pathway; AMP from IMP: step 1/2. Functionally, plays an important role in the de novo pathway of purine nucleotide biosynthesis. Catalyzes the first committed step in the biosynthesis of AMP from IMP. The protein is Adenylosuccinate synthetase of Campylobacter jejuni subsp. jejuni serotype O:2 (strain ATCC 700819 / NCTC 11168).